The sequence spans 196 residues: Imidazoleglycerol-phosphate dehydratase (196 aa).

The protein belongs to the imidazoleglycerol-phosphate dehydratase family.

The protein resides in the cytoplasm. The catalysed reaction is D-erythro-1-(imidazol-4-yl)glycerol 3-phosphate = 3-(imidazol-4-yl)-2-oxopropyl phosphate + H2O. It functions in the pathway amino-acid biosynthesis; L-histidine biosynthesis; L-histidine from 5-phospho-alpha-D-ribose 1-diphosphate: step 6/9. In Clostridium botulinum (strain Langeland / NCTC 10281 / Type F), this protein is Imidazoleglycerol-phosphate dehydratase.